The sequence spans 372 residues: Pepsin A (372 aa).

A propeptide spans 1–42 (activation peptide); that stretch reads MSVVKIPLVKKKSLRQNLIENGKLKEFMRTHKYNLGSKYIRE. A Peptidase A1 domain is found at 60–369; that stretch reads YFGTIGIGTP…DRGNNQIGLA (310 aa). Residue Asp78 is part of the active site. Cysteines 91 and 96 form a disulfide. Ser114 carries the post-translational modification Phosphoserine. A disulfide bridge links Cys252 with Cys256. The active site involves Asp261. The cysteines at positions 295 and 328 are disulfide-linked.

The protein belongs to the peptidase A1 family.

The protein localises to the secreted. The enzyme catalyses Preferential cleavage: hydrophobic, preferably aromatic, residues in P1 and P1' positions. Cleaves 1-Phe-|-Val-2, 4-Gln-|-His-5, 13-Glu-|-Ala-14, 14-Ala-|-Leu-15, 15-Leu-|-Tyr-16, 16-Tyr-|-Leu-17, 23-Gly-|-Phe-24, 24-Phe-|-Phe-25 and 25-Phe-|-Tyr-26 bonds in the B chain of insulin.. Its function is as follows. Shows particularly broad specificity; although bonds involving phenylalanine and leucine are preferred, many others are also cleaved to some extent. The polypeptide is Pepsin A (PGA) (Bos taurus (Bovine)).